Consider the following 1250-residue polypeptide: DNA excision repair protein ERCC-6-like (1250 aa).

At S14 the chain carries Phosphoserine. Residues 21 to 54 (YLRYVKEAKEATKNGDLEEAFKLFNLAKDIFPNE) form a TPR 1 repeat. One can recognise a Helicase ATP-binding domain in the interval 109–277 (SLYRDGRKGG…WSLFDFACQG (169 aa)). Residue 122–129 (DDMGLGKT) participates in ATP binding. The short motif at 228–231 (DEAH) is the DEAH box element. The Helicase C-terminal domain maps to 464–620 (FLMDLLKRLR…EKKNPFRYFS (157 aa)). The disordered stretch occupies residues 735–768 (VFPSSTKKKCPKLNKPQPQPSPLLSTHHTQEEDI). Phosphoserine occurs at positions 755, 774, 807, and 810. T813 bears the Phosphothreonine mark. Position 820 is a phosphoserine (S820). A disordered region spans residues 926 to 946 (SALQDAQASEAKLEEEPSASS). 5 positions are modified to phosphoserine: S969, S971, S995, S1004, and S1028. The disordered stretch occupies residues 1061 to 1092 (ASTPKNDISPPGRFFSSQIPSSVNKSMNSRRS). A Phosphothreonine; by PLK1 modification is found at T1063. Phosphoserine is present on S1069. The span at 1075–1087 (FSSQIPSSVNKSM) shows a compositional bias: polar residues. Phosphoserine is present on residues S1098 and S1118. The disordered stretch occupies residues 1110-1199 (MEERLDDSSE…QDKAAEATND (90 aa)). Residues 1115–1124 (DDSSEAKGPE) show a composition bias toward basic and acidic residues. Residues 1125–1135 (DYPEEGVEESS) show a composition bias toward acidic residues. Polar residues predominate over residues 1149–1173 (ETLSSENKSSWLMTSKPSALAQETS). Phosphoserine occurs at positions 1181 and 1188. The stretch at 1200-1233 (YETLVKRGKELKECGKIQEALNCLVKALDIKSAD) is one TPR 2 repeat.

This sequence belongs to the SNF2/RAD54 helicase family. In terms of assembly, interacts with PLK1, which phosphorylates it. Both proteins are mutually dependent on each other for correct subcellular localization. Interacts (via N-terminal TPR repeat) with BEND3 (via BEN domains 1 and 3); the interaction is direct. Phosphorylation by PLK1 prevents the association with chromosome arms and restricts its localization to the kinetochore-centromere region.

The protein localises to the chromosome. It localises to the centromere. The protein resides in the kinetochore. It carries out the reaction ATP + H2O = ADP + phosphate + H(+). In terms of biological role, DNA helicase that acts as a tension sensor that associates with catenated DNA which is stretched under tension until it is resolved during anaphase. Functions as ATP-dependent DNA translocase. Can promote Holliday junction branch migration (in vitro). The sequence is that of DNA excision repair protein ERCC-6-like (ERCC6L) from Homo sapiens (Human).